A 117-amino-acid polypeptide reads, in one-letter code: MQTITLLALLACIAVPIFADFDHLRARRDVVEASGEGSGESSGEKIVESSGEGSGESSGDKIVEASGEGSGEGSGASDAVLESSGEGSGENLSNGIVASDAPKDVKALTASEFAVSV.

An N-terminal signal peptide occupies residues 1–19 (MQTITLLALLACIAVPIFA). Residues 31-97 (VEASGEGSGE…SGENLSNGIV (67 aa)) form a disordered region. 2 stretches are compositionally biased toward low complexity: residues 32–41 (EASGEGSGES) and 48–57 (ESSGEGSGES). O-linked (Xyl...) (chondroitin sulfate) serine glycosylation is found at Ser66, Ser70, Ser74, Ser84, and Ser88. Low complexity predominate over residues 75 to 95 (GASDAVLESSGEGSGENLSNG). Asn91 is a glycosylation site (N-linked (GlcNAc...) asparagine).

The sequence is that of Chondroitin proteoglycan 7 (cpg-7) from Caenorhabditis briggsae.